Consider the following 365-residue polypeptide: tRNA/tmRNA (uracil-C(5))-methyltransferase (365 aa).

5 residues coordinate S-adenosyl-L-methionine: Q189, Y217, N222, E238, and D298. C323 acts as the Nucleophile in catalysis. E357 acts as the Proton acceptor in catalysis.

The protein belongs to the class I-like SAM-binding methyltransferase superfamily. RNA M5U methyltransferase family. TrmA subfamily.

It carries out the reaction uridine(54) in tRNA + S-adenosyl-L-methionine = 5-methyluridine(54) in tRNA + S-adenosyl-L-homocysteine + H(+). It catalyses the reaction uridine(341) in tmRNA + S-adenosyl-L-methionine = 5-methyluridine(341) in tmRNA + S-adenosyl-L-homocysteine + H(+). Dual-specificity methyltransferase that catalyzes the formation of 5-methyluridine at position 54 (m5U54) in all tRNAs, and that of position 341 (m5U341) in tmRNA (transfer-mRNA). In Shewanella piezotolerans (strain WP3 / JCM 13877), this protein is tRNA/tmRNA (uracil-C(5))-methyltransferase.